The chain runs to 373 residues: Putative glutamate--cysteine ligase 2 (373 aa).

This sequence belongs to the glutamate--cysteine ligase type 2 family. YbdK subfamily. In terms of assembly, homodimer.

The enzyme catalyses L-cysteine + L-glutamate + ATP = gamma-L-glutamyl-L-cysteine + ADP + phosphate + H(+). ATP-dependent carboxylate-amine ligase which exhibits weak glutamate--cysteine ligase activity. The chain is Putative glutamate--cysteine ligase 2 from Enterobacter sp. (strain 638).